A 145-amino-acid polypeptide reads, in one-letter code: uncharacterized protein (145 aa).

This sequence to B.subtilis XkdJ.

This is an uncharacterized protein from Bacillus subtilis (strain 168).